The chain runs to 230 residues: uncharacterized protein (230 aa).

The segment at 1 to 57 (MPGPHSPNPGVGTNGPAPYPEPSSHEPQALDYPHDLGAAEPAFAPGPADDAALPPAA) is disordered. Residues 38 to 55 (AAEPAFAPGPADDAALPP) show a composition bias toward low complexity. Residues 75 to 95 (LLIGIVVALALVSAMTAAIIY) traverse the membrane as a helical segment.

It localises to the membrane. This is an uncharacterized protein from Mycobacterium tuberculosis (strain CDC 1551 / Oshkosh).